We begin with the raw amino-acid sequence, 467 residues long: uncharacterized protein (467 aa).

The segment at 416–467 (KQQRAQTAVVGTTKELVSKATHMKPPRTPPGEAEHRKRSQSLAICQWNKNSR) is disordered. A compositionally biased stretch (polar residues) spans 455–467 (QSLAICQWNKNSR).

This is an uncharacterized protein from Homo sapiens (Human).